The primary structure comprises 313 residues: Ribonuclease HIII (313 aa).

The interval 62-88 is disordered; sequence AERWTADAETPAPKKPASKKSIPSVYQ. The region spanning 96–312 is the RNase H type-2 domain; it reads MSVIGSDEVG…TQKAKRIASK (217 aa). Residues aspartate 102, glutamate 103, and aspartate 207 each coordinate a divalent metal cation.

This sequence belongs to the RNase HII family. RnhC subfamily. Mn(2+) serves as cofactor. It depends on Mg(2+) as a cofactor.

It localises to the cytoplasm. It carries out the reaction Endonucleolytic cleavage to 5'-phosphomonoester.. Its function is as follows. Endonuclease that specifically degrades the RNA of RNA-DNA hybrids. The polypeptide is Ribonuclease HIII (Bacillus licheniformis (strain ATCC 14580 / DSM 13 / JCM 2505 / CCUG 7422 / NBRC 12200 / NCIMB 9375 / NCTC 10341 / NRRL NRS-1264 / Gibson 46)).